We begin with the raw amino-acid sequence, 350 residues long: FAD:protein FMN transferase (350 aa).

An N-terminal signal peptide occupies residues 1-19; that stretch reads MDMTFFRAALLGACVLLSG. A lipid anchor (N-palmitoyl cysteine) is attached at C20. A lipid anchor (S-diacylglycerol cysteine) is attached at C20. FAD-binding positions include M41, W78, 119–121, and D181; that span reads AMD. T184 is a Mg(2+) binding site. 2 residues coordinate FAD: E187 and I272. Mg(2+) is bound by residues D298, D301, and T302.

It belongs to the ApbE family. Mg(2+) serves as cofactor.

It is found in the cell inner membrane. It carries out the reaction L-threonyl-[protein] + FAD = FMN-L-threonyl-[protein] + AMP + H(+). In terms of biological role, flavin transferase that catalyzes the transfer of the FMN moiety of FAD and its covalent binding to the hydroxyl group of a threonine residue in a target flavoprotein such as NqrB and NqrC, two subunits of the NQR complex. The protein is FAD:protein FMN transferase of Klebsiella pneumoniae (strain 342).